Reading from the N-terminus, the 330-residue chain is Elongation factor Ts, mitochondrial (330 aa).

Residues 1–16 (MYRNCRKAFTFSLRHY) constitute a mitochondrion transit peptide.

Belongs to the EF-Ts family.

Its subcellular location is the mitochondrion. Functionally, associates with the EF-Tu.GDP complex and induces the exchange of GDP to GTP. It remains bound to the aminoacyl-tRNA.EF-Tu.GTP complex up to the GTP hydrolysis stage on the ribosome. The protein is Elongation factor Ts, mitochondrial of Laccaria bicolor (strain S238N-H82 / ATCC MYA-4686) (Bicoloured deceiver).